Here is a 689-residue protein sequence, read N- to C-terminus: Acetyl-coenzyme A synthetase 2-like, mitochondrial (689 aa).

The N-terminal 37 residues, 1–37 (MAARTLGRGVGRLLGSLRGLSGQPARPPCGVSAPRRA), are a transit peptide targeting the mitochondrion. The interval 17-46 (LRGLSGQPARPPCGVSAPRRAASGPSGSAP) is disordered. Over residues 32–46 (SAPRRAASGPSGSAP) the composition is skewed to low complexity. CoA is bound by residues 224-227 (RGGR) and Thr341. Lys396 carries the post-translational modification N6-acetyllysine. Residues 417–419 (GEP), 441–446 (DTWWQT), Asp533, and Arg548 each bind ATP. Residue Ser556 coordinates CoA. Arg559 contacts ATP. N6-acetyllysine is present on Lys642.

The protein belongs to the ATP-dependent AMP-binding enzyme family. Interacts with SIRT3. Post-translationally, reversibly acetylated on Lys-642. The acetyl-CoA synthase activity is inhibited by acetylation and activated by deacetylation mediated by the deacetylase SIRT3.

It is found in the mitochondrion matrix. The catalysed reaction is acetate + ATP + CoA = acetyl-CoA + AMP + diphosphate. It carries out the reaction propanoate + ATP + CoA = propanoyl-CoA + AMP + diphosphate. Inhibited by acetylation at Lys-642 and activated by deacetylation mediated by the deacetylase SIRT3. Functionally, catalyzes the synthesis of acetyl-CoA from short-chain fatty acids. Acetate is the preferred substrate. Can also utilize propionate with a much lower affinity. Provides acetyl-CoA that is utilized mainly for oxidation under ketogenic conditions. Involved in thermogenesis under ketogenic conditions, using acetate as a vital fuel when carbohydrate availability is insufficient. The polypeptide is Acetyl-coenzyme A synthetase 2-like, mitochondrial (ACSS1) (Homo sapiens (Human)).